Here is a 1259-residue protein sequence, read N- to C-terminus: Cingulin (1259 aa).

A head region spans residues 9 to 324 (MADQPIPVGQ…EKFPSLQAQP (316 aa)). A ZIM motif is present at residues 41–55 (QDSYGVAVRVQGIDG). The span at 69 to 79 (SSYDYDRHYSE) shows a compositional bias: basic and acidic residues. Disordered regions lie at residues 69–151 (SSYD…IDTK), 169–232 (VRGR…RQSL), 317–338 (FPSLQAQPGEDTRSLGSQKKEL), 941–969 (KSRREIGEAQKQAKEKTAEAERHQFNSSR), and 1192–1259 (REME…TSSC). Polar residues predominate over residues 80–100 (RSSTLDTAYSQSSRESAWSRG). A compositionally biased stretch (low complexity) spans 117 to 127 (SATSQQSTSAS). Polar residues predominate over residues 128 to 145 (NKTNKNGLSTSSFSNQSS). Basic and acidic residues predominate over residues 179–204 (ALKDERKRSQSLDGRKNYQDTADSRE). Residues 220–229 (VSSANRSFAR) are compositionally biased toward polar residues. Positions 325-1218 (GEDTRSLGSQ…KTMEKESKRK (894 aa)) form a coiled coil. Residues 326 to 338 (EDTRSLGSQKKEL) are compositionally biased toward basic and acidic residues. Positions 1220-1259 (IRPAHNDDDDLSSDGEYGGSYDPSSITSLLTESNLQTSSC) are tail. Positions 1241-1259 (DPSSITSLLTESNLQTSSC) are enriched in polar residues.

The protein belongs to the cingulin family. Parallel homodimer. Interacts with TJP1/ZO1 and TJP2/ZO2.

The protein localises to the cell junction. Its subcellular location is the tight junction. Its function is as follows. Probably plays a role in the formation and regulation of the tight junction (TJ) paracellular permeability barrier, possibly by linking ZO proteins to the actomyosin cytoskeleton. This chain is Cingulin, found in Xenopus tropicalis (Western clawed frog).